A 55-amino-acid polypeptide reads, in one-letter code: uncharacterized protein (55 aa).

2 helical membrane passes run 5–25 (LISI…MMHM) and 26–46 (LPLY…LYRL).

The protein resides in the cell membrane. This is an uncharacterized protein from Bacillus subtilis (strain 168).